The primary structure comprises 633 residues: DNA repair protein XRCC1 (633 aa).

Ser140 is subject to Phosphoserine. A Glycyl lysine isopeptide (Lys-Gly) (interchain with G-Cter in SUMO1); alternate cross-link involves residue Lys176. A Glycyl lysine isopeptide (Lys-Gly) (interchain with G-Cter in SUMO2); alternate cross-link involves residue Lys176. Thr198 is modified (phosphothreonine). Ser199 is subject to Phosphoserine. At Thr202 the chain carries Phosphothreonine. A phosphoserine mark is found at Ser204, Ser226, and Ser241. A compositionally biased stretch (low complexity) spans 221–231 (AASSASPVSRA). The tract at residues 221-313 (AASSASPVSR…TEPRRPRAGP (93 aa)) is disordered. Residues 240-257 (ESPKGKRKLDLNQEEKKT) show a composition bias toward basic and acidic residues. Thr257 is modified (phosphothreonine). Ser259 and Ser266 each carry phosphoserine. A compositionally biased stretch (low complexity) spans 277–291 (APTRTPATAPVPARA). The residue at position 281 (Thr281) is a Phosphothreonine. Basic and acidic residues predominate over residues 299 to 313 (PRGEGTEPRRPRAGP). The BRCT 1 domain occupies 315-403 (ELGKILQGVV…RRLPSQRYLM (89 aa)). Ser371 bears the Phosphoserine; by PRKDC mark. Disordered stretches follow at residues 400 to 462 (RYLM…AASP), 471 to 490 (EGVQ…DTED), and 498 to 536 (QKEH…DLPV). Phosphoserine is present on residues Ser408, Ser409, Ser410, and Ser421. Positions 427-443 (KLPQKQPQTKTKPTQAA) are enriched in low complexity. Phosphoserine occurs at positions 446 and 447. Residues Thr453 and Thr457 each carry the phosphothreonine modification. Ser461 and Ser485 each carry phosphoserine. Acidic residues predominate over residues 481 to 490 (GAEDSGDTED). Phosphothreonine is present on Thr488. Residue Ser518 is modified to Phosphoserine. A phosphothreonine mark is found at Thr519 and Thr523. The BRCT 2 domain maps to 538-629 (ELPDFFQGKH…KLLPHQLYGV (92 aa)).

In terms of assembly, homodimer. Interacts with polynucleotide kinase (PNK), DNA polymerase-beta (POLB) and DNA ligase III (LIG3). Interacts with APTX and APLF. Interacts with APEX1; the interaction is induced by SIRT1 and increases with the acetylated form of APEX1. Interacts with (poly-ADP-ribosylated) PARP1. Post-translationally, phosphorylation of Ser-371 causes dimer dissociation. Phosphorylation by CK2 promotes interaction with APTX and APLF. Sumoylated. As to expression, expressed in fibroblasts, retinal pigmented epithelial cells and lymphoblastoid cells (at protein level).

It is found in the nucleus. The protein localises to the chromosome. Scaffold protein involved in DNA single-strand break repair by mediating the assembly of DNA break repair protein complexes. Negatively regulates ADP-ribosyltransferase activity of PARP1 during base-excision repair in order to prevent excessive PARP1 activity. Recognizes and binds poly-ADP-ribose chains: specifically binds auto-poly-ADP-ribosylated PARP1, limiting its activity. The protein is DNA repair protein XRCC1 of Homo sapiens (Human).